Consider the following 368-residue polypeptide: Phosphoribosylaminoimidazole-succinocarboxamide synthase (368 aa).

The protein belongs to the SAICAR synthetase family.

The catalysed reaction is 5-amino-1-(5-phospho-D-ribosyl)imidazole-4-carboxylate + L-aspartate + ATP = (2S)-2-[5-amino-1-(5-phospho-beta-D-ribosyl)imidazole-4-carboxamido]succinate + ADP + phosphate + 2 H(+). It functions in the pathway purine metabolism; IMP biosynthesis via de novo pathway; 5-amino-1-(5-phospho-D-ribosyl)imidazole-4-carboxamide from 5-amino-1-(5-phospho-D-ribosyl)imidazole-4-carboxylate: step 1/2. The sequence is that of Phosphoribosylaminoimidazole-succinocarboxamide synthase from Vibrio cholerae serotype O1 (strain ATCC 39315 / El Tor Inaba N16961).